We begin with the raw amino-acid sequence, 624 residues long: MAAAQISAEEMEELREAFTKVDVDGNGHISTDELNALFKAANLPLPGYRVREIIQEISRTMDLNQDGKITFDEFAKVVHDLKSSEVAKTFRKAINKKEGICSVAGTSEQSGTQHSYSEEEKVAFVNWVNKALEKDPDCQHVLPMDPSTDDLFTAVGDGIVLCKMINLSVPDTIDERTINKKKLTPFTIQENLNLALNSASAIGCHVVNIGAEDLKEGRQHLVLGLLWQVIKIGLFADIEISRNEALIALLRDGESLEDLVKLSPEELLLRWANYHLEEAGCPKINNFSSDIKDSKAYYNILNQVAPKRDEEGIPAIPIDISGIREKDDLKRAECMLEQADRLGCRQFVTATDVVRGNPKLNLAYVANLFNKYPALKKPENQDIDWSSIEGETREERTFRNWMNSLGVNPRVNHLYVDLADALVIFQLYEKIKVPVDWDKVNKPPYPKLGSNMKKLENCNYAVELGKKEAKFSLVGIAGQDLNEGNRTLTLALLWQLMRRYTLNILEDLGDGQKIIDETIVQWVNETLTQAGKGTISGFKDGSISSSMPVLDLIDAIQPGSIRYDLLKAEDLTDEKKLNNAKYAISMARKIGARVYALPEDLVEVKPKMVMTVFACLMARGMRRI.

EF-hand domains follow at residues 9–44 and 49–84; these read EEME…ANLP and RVRE…LKSS. The Ca(2+) site is built by D22, D24, N26, H28, E33, D62, N64, D66, K68, and E73. 4 Calponin-homology (CH) domains span residues 118-234, 262-373, 392-501, and 513-621; these read EEEK…KIGL, LSPE…NKYP, TREE…RRYT, and KIID…ARGM. 2 actin-binding regions span residues 118–373 and 392–621; these read EEEK…NKYP and TREE…ARGM.

As to quaternary structure, monomer. Expressed by macrophages (at protein level).

The protein resides in the cytoplasm. It localises to the cytoskeleton. It is found in the cell junction. The protein localises to the cell projection. Its subcellular location is the ruffle membrane. Its function is as follows. Actin-binding protein. Plays a role in the activation of T-cells. This chain is Plastin-2, found in Danio rerio (Zebrafish).